Here is a 524-residue protein sequence, read N- to C-terminus: Nickel-binding periplasmic protein (524 aa).

The signal sequence occupies residues Met-1–Ala-22.

Belongs to the bacterial solute-binding protein 5 family.

It is found in the periplasm. Involved in a nickel transport system, probably represents the nickel binder. This chain is Nickel-binding periplasmic protein (nikA), found in Escherichia coli (strain K12).